The chain runs to 500 residues: MTEQVIDENKLIAERRAKLESIRPNCSANAHPNTFRRTHKAAELQAQYGQNTKEELEALGFKTSIAGRIMAKRGPFLVIQDVSGRIQAYAEKSVQADLKERFQGLDIGDIIGVTGQLHLSGKGDLYVNMEQYELLTKALRPLPADYYGLADQEMRYRQRYVDLIVNEDSRNAFIMRSKVVSAIRNFMIKKEFMEVETPMMHVIPGGASARPFITHHNALDMPMYLRIAPELYLKRLVVGGFERVFEINRNFRNEGLSPRHNPEFTMMEFYMAYADYKDLMDLTEEMLSSIAIELLGSAQMPYGEHTVDFGGPYARLSMLEAIQKYNPDNATIQAMTYEQVKDVEFMRDLAKSLGMKIEKFWTCGQLLEEIFGETAEWQLMQPTFITGYPADISPLARRNDDNHFITDRFEFFIGGREVANGFSELNDAEDQDNRFKAQVDAKDAGDDEAMFYDADYITALEHGLPPTAGQGIGIDRLVMLFTNTHTIRDVILFPAMRPQA.

Mg(2+)-binding residues include Glu410 and Glu417.

It belongs to the class-II aminoacyl-tRNA synthetase family. In terms of assembly, homodimer. Mg(2+) is required as a cofactor.

It is found in the cytoplasm. It catalyses the reaction tRNA(Lys) + L-lysine + ATP = L-lysyl-tRNA(Lys) + AMP + diphosphate. This chain is Lysine--tRNA ligase, found in Shewanella baltica (strain OS155 / ATCC BAA-1091).